The chain runs to 201 residues: Small ribosomal subunit protein uS4c (201 aa).

The disordered stretch occupies residues 15–44; it reads LGALPGLTNKRPRAGSDLRNQSRSGKKSQY. The 61-residue stretch at 89 to 149 folds into the S4 RNA-binding domain; sequence MRLDNILFRL…DEQNSRALIQ (61 aa).

The protein belongs to the universal ribosomal protein uS4 family. In terms of assembly, part of the 30S ribosomal subunit. Contacts protein S5. The interaction surface between S4 and S5 is involved in control of translational fidelity.

Its subcellular location is the plastid. It is found in the chloroplast. Its function is as follows. One of the primary rRNA binding proteins, it binds directly to 16S rRNA where it nucleates assembly of the body of the 30S subunit. With S5 and S12 plays an important role in translational accuracy. The chain is Small ribosomal subunit protein uS4c (rps4) from Daucus carota (Wild carrot).